The primary structure comprises 183 residues: Helofensin-2 (183 aa).

Positions 1–26 are cleaved as a signal peptide; the sequence is MQMDWLFIAVISGIGLLSSGVPGTQG. A C(6)C(4)C(9)C(6)CC 1; approximate repeat occupies 27–64; it reads AYTTEQCRALNGSCNFYACFPKNVIIGKCDWWGWSCCA. One copy of the C(6)C(4)C(9)C(6)CC 2; approximate repeat lies at 65–101; it reads RTPLERCTAKKGTCTKTGCTKTDTDHGPCDGGAQCCQ. One copy of the C(6)C(4)C(9)C(6)CC 3; approximate repeat lies at 102–139; the sequence is RDPVKYCKFHGNVCGRGKCPMDHIPIGEQCMPGYPCCK. One copy of the C(6)C(4)C(9)C(6)CC 4; approximate repeat lies at 140–177; that stretch reads RDGPAYCKSKGGKCLRRCSQIVPTDIIGVCADGVPCCK.

This sequence belongs to the beta-defensin family. Helofensin subfamily. Expressed by the mandibular venom gland.

It localises to the secreted. In terms of biological role, lethal toxin which possesses an inhibitory effect on direct electrical stimulation of the isolated hemi-diaphragm of mice. Neither hemorrhagic nor hemolytic activities are detected. Phospholipase A2 activity, proteolytic activity and arginine esterolytic activity are absent. This Heloderma suspectum cinctum (Banded Gila monster) protein is Helofensin-2.